The sequence spans 560 residues: Probable pectinesterase/pectinesterase inhibitor 20 (560 aa).

A signal peptide spans 1 to 24; the sequence is MSQKLMFLFTLACLSSLPSPFISA. The pectinesterase inhibitor 20 stretch occupies residues 25 to 179; the sequence is QIPAIGNATS…TKLYGVSLAL (155 aa). 7 N-linked (GlcNAc...) asparagine glycosylation sites follow: N31, N168, N251, N255, N268, N307, and N314. The interval 246–544 is pectinesterase 20; sequence VTVIQNGTGN…FTVTNFLVGE (299 aa). T323 provides a ligand contact to substrate. N340 carries N-linked (GlcNAc...) asparagine glycosylation. Position 353 (Q353) interacts with substrate. D376 serves as the catalytic Proton donor; for pectinesterase activity. Cysteines 390 and 410 form a disulfide. The active-site Nucleophile; for pectinesterase activity is D397. Residues 417-441 are disordered; it reads PRKGQSNEVTAQGRTDPNQNTGTAI. Residues 419–439 show a composition bias toward polar residues; that stretch reads KGQSNEVTAQGRTDPNQNTGT. N456 carries N-linked (GlcNAc...) asparagine glycosylation. 2 residues coordinate substrate: R465 and W467. N507, N528, and N534 each carry an N-linked (GlcNAc...) asparagine glycan.

This sequence in the N-terminal section; belongs to the PMEI family. The protein in the C-terminal section; belongs to the pectinesterase family. In terms of tissue distribution, expressed in flower buds.

Its subcellular location is the secreted. It localises to the cell wall. The enzyme catalyses [(1-&gt;4)-alpha-D-galacturonosyl methyl ester](n) + n H2O = [(1-&gt;4)-alpha-D-galacturonosyl](n) + n methanol + n H(+). Its pathway is glycan metabolism; pectin degradation; 2-dehydro-3-deoxy-D-gluconate from pectin: step 1/5. Its function is as follows. Acts in the modification of cell walls via demethylesterification of cell wall pectin. The chain is Probable pectinesterase/pectinesterase inhibitor 20 (PME20) from Arabidopsis thaliana (Mouse-ear cress).